The chain runs to 354 residues: Lysine racemase (354 aa).

Lys-36 bears the N6-(pyridoxal phosphate)lysine mark.

The protein belongs to the alanine racemase family. Homodimer. Pyridoxal 5'-phosphate is required as a cofactor.

It catalyses the reaction L-lysine = D-lysine. The enzyme catalyses L-ornithine = D-ornithine. It functions in the pathway cell wall biogenesis; peptidoglycan biosynthesis. Catalyzes the interconversion of D-lysine and L-lysine. Has also high activity toward ornithine, and weaker activity toward alanine. Contributes to production of D-lysine and D-alanine for use as peptidoglycan components. The polypeptide is Lysine racemase (Thermotoga maritima (strain ATCC 43589 / DSM 3109 / JCM 10099 / NBRC 100826 / MSB8)).